Here is a 357-residue protein sequence, read N- to C-terminus: Homoserine O-succinyltransferase (357 aa).

The active-site Acyl-thioester intermediate is Cys146. Substrate is bound by residues Lys167 and Ser196. His239 serves as the catalytic Proton acceptor. Glu241 is a catalytic residue. Arg253 serves as a coordination point for substrate.

Belongs to the MetA family.

The protein resides in the cytoplasm. The enzyme catalyses L-homoserine + succinyl-CoA = O-succinyl-L-homoserine + CoA. The protein operates within amino-acid biosynthesis; L-methionine biosynthesis via de novo pathway; O-succinyl-L-homoserine from L-homoserine: step 1/1. In terms of biological role, transfers a succinyl group from succinyl-CoA to L-homoserine, forming succinyl-L-homoserine. The polypeptide is Homoserine O-succinyltransferase (Allochromatium vinosum (strain ATCC 17899 / DSM 180 / NBRC 103801 / NCIMB 10441 / D) (Chromatium vinosum)).